The chain runs to 611 residues: Alpha-1,2-mannosyltransferase ALG9 (611 aa).

The segment covering 1–10 has biased composition (basic residues); sequence MASRRARQRL. The tract at residues 1–51 is disordered; the sequence is MASRRARQRLKGGGGGGGGGGDAGPAAEKLEQLGSREAGAEPRPESGNKAG. Residues 1 to 135 are Lumenal-facing; it reads MASRRARQRL…FHARILQTNK (135 aa). Over residues 11 to 23 the composition is skewed to gly residues; the sequence is KGGGGGGGGGGDA. An N-linked (GlcNAc...) asparagine glycan is attached at Asn-77. Residues 136–156 traverse the membrane as a helical segment; that stretch reads ILVFYFLRCLLAFVSCVCELY. Residues 157-171 lie on the Cytoplasmic side of the membrane; sequence FYKAVCKKFGLHVSR. The chain crosses the membrane as a helical span at residues 172–192; it reads MMLAFLVLSTGMFCSSSAFLP. Over 193-213 the chain is Lumenal; it reads SSFCMYTTLIAMTGWYMDKTP. Residues 214–234 traverse the membrane as a helical segment; it reads IAVLGVAAGAILGWPFSAALG. The Cytoplasmic segment spans residues 235–249; it reads LPIAFDLLARKHRWK. A helical transmembrane segment spans residues 250-270; sequence SFLLWSLVALALFLVPVVVID. Topologically, residues 271-310 are lumenal; that stretch reads SYYYGKLVVAPLNIVLYNVFTSHGPDLYGTEPWYFYLING. The helical transmembrane segment at 311-331 threads the bilayer; it reads FLNFNVAFALALLVLPLTFLM. Residues 332 to 342 are Cytoplasmic-facing; that stretch reads EYLLQRFHVQN. A helical membrane pass occupies residues 343–363; sequence LGHPYWLTLAPMYIWFIIFFI. The Lumenal segment spans residues 364 to 370; it reads QPHKEER. The helical transmembrane segment at 371–391 threads the bilayer; it reads FLFPVYPLICLCGAVALSALQ. Topologically, residues 392-405 are cytoplasmic; that stretch reads KCYHFVFQRYRLEH. Residues 406–426 traverse the membrane as a helical segment; that stretch reads YTVTSNWLALGTVFLFGLLSF. Residues 427–611 lie on the Lumenal side of the membrane; it reads SRSVALFRGY…AKPSRKKSGG (185 aa). 2 N-linked (GlcNAc...) asparagine glycosylation sites follow: Asn-550 and Asn-593.

This sequence belongs to the glycosyltransferase 22 family.

Its subcellular location is the endoplasmic reticulum membrane. It carries out the reaction an alpha-D-Man-(1-&gt;2)-alpha-D-Man-(1-&gt;2)-alpha-D-Man-(1-&gt;3)-[alpha-D-Man-(1-&gt;3)-alpha-D-Man-(1-&gt;6)]-beta-D-Man-(1-&gt;4)-beta-D-GlcNAc-(1-&gt;4)-alpha-D-GlcNAc-diphospho-di-trans,poly-cis-dolichol + a di-trans,poly-cis-dolichyl beta-D-mannosyl phosphate = an alpha-D-Man-(1-&gt;2)-alpha-D-Man-(1-&gt;2)-alpha-D-Man-(1-&gt;3)-[alpha-D-Man-(1-&gt;2)-alpha-D-Man-(1-&gt;3)-alpha-D-Man-(1-&gt;6)]-beta-D-Man-(1-&gt;4)-beta-D-GlcNAc-(1-&gt;4)-alpha-D-GlcNAc-diphospho-di-trans,poly-cis-dolichol + a di-trans,poly-cis-dolichyl phosphate + H(+). It catalyses the reaction an alpha-D-Man-(1-&gt;2)-alpha-D-Man-(1-&gt;2)-alpha-D-Man-(1-&gt;3)-[alpha-D-Man-(1-&gt;2)-alpha-D-Man-(1-&gt;3)-[alpha-D-Man-(1-&gt;6)]-alpha-D-Man-(1-&gt;6)]-beta-D-Man-(1-&gt;4)-beta-D-GlcNAc-(1-&gt;4)-alpha-D-GlcNAc-diphospho-di-trans,poly-cis-dolichol + a di-trans,poly-cis-dolichyl beta-D-mannosyl phosphate = an alpha-D-Man-(1-&gt;2)-alpha-D-Man-(1-&gt;2)-alpha-D-Man-(1-&gt;3)-[alpha-D-Man-(1-&gt;2)-alpha-D-Man-(1-&gt;3)-[alpha-D-Man-(1-&gt;2)-alpha-D-Man-(1-&gt;6)]-alpha-D-Man-(1-&gt;6)]-beta-D-Man-(1-&gt;4)-beta-D-GlcNAc-(1-&gt;4)-alpha-D-GlcNAc-diphospho-di-trans,poly-cis-dolichol + a di-trans,poly-cis-dolichyl phosphate + H(+). The protein operates within protein modification; protein glycosylation. In terms of biological role, mannosyltransferase that operates in the biosynthetic pathway of dolichol-linked oligosaccharides, the glycan precursors employed in protein asparagine (N)-glycosylation. The assembly of dolichol-linked oligosaccharides begins on the cytosolic side of the endoplasmic reticulum membrane and finishes in its lumen. The sequential addition of sugars to dolichol pyrophosphate produces dolichol-linked oligosaccharides containing fourteen sugars, including two GlcNAcs, nine mannoses and three glucoses. Once assembled, the oligosaccharide is transferred from the lipid to nascent proteins by oligosaccharyltransferases. In the lumen of the endoplasmic reticulum, catalyzes the addition of the seventh and ninth alpha-1,2-linked mannose residues to Man(6)GlcNAc(2)-PP-dolichol and Man(8)GlcNAc(2)-PP-dolichol respectively. This chain is Alpha-1,2-mannosyltransferase ALG9, found in Mus musculus (Mouse).